A 330-amino-acid chain; its full sequence is Aspartate--ammonia ligase (330 aa).

This sequence belongs to the class-II aminoacyl-tRNA synthetase family. AsnA subfamily. Homodimer.

It localises to the cytoplasm. It catalyses the reaction L-aspartate + NH4(+) + ATP = L-asparagine + AMP + diphosphate + H(+). It participates in amino-acid biosynthesis; L-asparagine biosynthesis; L-asparagine from L-aspartate (ammonia route): step 1/1. In Salmonella typhi, this protein is Aspartate--ammonia ligase.